We begin with the raw amino-acid sequence, 1369 residues long: MutS protein homolog 5 (1369 aa).

The segment at 138 to 190 (IYEDGTTEEGTSEDTVPTWDSSLAYSTDETTAEKEEKEEDEDDDDEGLPAKLN) is disordered. Residues 173 to 184 (EKEEDEDDDDEG) are compositionally biased toward acidic residues. 639–646 (GPNACGKS) serves as a coordination point for ATP. Disordered stretches follow at residues 880–915 (SMRNVSEEIEKERSEASTPASKSRSTITARSNSVLS), 935–1135 (KKKK…RSSN), 1153–1182 (LKSQDTYDPNVTPRSSSRRELRPDVSHSQN), and 1248–1278 (NFIFKTPEPRSSEKQRSLLKNKGQASNSSIS). A compositionally biased stretch (basic and acidic residues) spans 884-894 (VSEEIEKERSE). Polar residues-rich tracts occupy residues 895–915 (ASTPASKSRSTITARSNSVLS) and 941–950 (TGSSMESSMS). A compositionally biased stretch (acidic residues) spans 954–967 (FQEEDEGTEGEEDQ). Residues 991-1003 (QSINSRHSFSTRT) show a composition bias toward polar residues. A compositionally biased stretch (low complexity) spans 1024–1037 (STSTSSPGPSASKS). The span at 1049 to 1065 (VKESQVLETPKQLSISS) shows a compositional bias: polar residues. The span at 1073–1084 (SSEKDVISRVSE) shows a compositional bias: basic and acidic residues. 2 stretches are compositionally biased toward polar residues: residues 1111-1124 (KNRSMNQSLIQSAR) and 1153-1167 (LKSQDTYDPNVTPRS). The span at 1254–1263 (PEPRSSEKQR) shows a compositional bias: basic and acidic residues.

The protein belongs to the DNA mismatch repair MutS family. As to quaternary structure, heterooligomer of him-14 and msh-5. Interacts with the brc-1-brd-1 heterodimer. In terms of tissue distribution, expressed in the germline.

It localises to the chromosome. Crucial component in meiotic recombination, functioning at some point after the initiation step of recombination. Plays a role in promoting the crossover outcome of meiotic recombination events. Required for formation of normal meiotic crossover, and crossover and chiasmata generated by artificially made DNA breaks. Together with him-14 and zhp-3 plays a role in the activation of DNA damage-dependent apoptosis at the DNA damage checkpoint in pachytene cells. The chain is MutS protein homolog 5 from Caenorhabditis elegans.